The chain runs to 596 residues: Aspartate--tRNA(Asp/Asn) ligase (596 aa).

Glutamate 172 provides a ligand contact to L-aspartate. The interval 196–199 (QLFK) is aspartate. Residue arginine 218 coordinates L-aspartate. ATP contacts are provided by residues 218 to 220 (RDE) and glutamine 227. Histidine 450 contacts L-aspartate. Glutamate 484 contributes to the ATP binding site. An L-aspartate-binding site is contributed by arginine 491. ATP is bound at residue 536 to 539 (GLDR).

The protein belongs to the class-II aminoacyl-tRNA synthetase family. Type 1 subfamily. In terms of assembly, homodimer.

The protein resides in the cytoplasm. It carries out the reaction tRNA(Asx) + L-aspartate + ATP = L-aspartyl-tRNA(Asx) + AMP + diphosphate. Aspartyl-tRNA synthetase with relaxed tRNA specificity since it is able to aspartylate not only its cognate tRNA(Asp) but also tRNA(Asn). Reaction proceeds in two steps: L-aspartate is first activated by ATP to form Asp-AMP and then transferred to the acceptor end of tRNA(Asp/Asn). This chain is Aspartate--tRNA(Asp/Asn) ligase, found in Acidithiobacillus ferrooxidans (strain ATCC 23270 / DSM 14882 / CIP 104768 / NCIMB 8455) (Ferrobacillus ferrooxidans (strain ATCC 23270)).